A 1764-amino-acid chain; its full sequence is Latent-transforming growth factor beta-binding protein 2 (1764 aa).

Residues 1 to 35 (MRAPTTVRCSGRIQRARWRGFLPLVLALLMGTSHA) form the signal peptide. The interval 80–140 (PGLSPSEWNQ…PPAARTAHSV (61 aa)) is disordered. The heparin-binding stretch occupies residues 94–115 (IPGRLAEAEARRPSRAQQLRRV). Over residues 108-128 (RAQQLRRVQSPVQTRRSNPRG) the composition is skewed to polar residues. The N-linked (GlcNAc...) asparagine glycan is linked to Asn175. Residues 181 to 213 (IKPVCQPPCQNRGSCSRPQLCICRSGFRGARCE) form the EGF-like 1 domain. 3 cysteine pairs are disulfide-bonded: Cys185/Cys195, Cys189/Cys201, and Cys203/Cys212. Residues 220 to 279 (EFDPQNARPVPRRSVEGAPGPHRSSEARGSLVTRIQPLLPPLPPPPSRTLSQTRPLQQHA) form a disordered region. Positions 226–243 (ARPVPRRSVEGAPGPHRS) are heparin-binding. A compositionally biased stretch (pro residues) spans 257–266 (LLPPLPPPPS). N-linked (GlcNAc...) asparagine glycosylation occurs at Asn330. 331 to 341 (LTEKIKKIKVV) contacts heparin. An EGF-like 2 domain is found at 383–415 (RIYFCQIPCLNGGRCIGRDECWCPANSTGKFCH). 3 cysteine pairs are disulfide-bonded: Cys387–Cys397, Cys391–Cys403, and Cys405–Cys414. A glycan (N-linked (GlcNAc...) asparagine) is linked at Asn408. Residues 484 to 529 (EVDPVPEDNSVETRASHRPHGSSGHSHWASNSIPARAGEAPRPPPV) form a disordered region. Ser493 carries the phosphoserine modification. One can recognise a TB 1 domain in the interval 538 to 590 (GQCYLSTVNGQCANPLGELTSQEDCCGSVGTSWGVTSCAPCPPRPAFPVIENG). 3 disulfides stabilise this stretch: Cys540/Cys562, Cys549/Cys575, and Cys563/Cys578. Asn602 is a glycosylation site (N-linked (GlcNAc...) asparagine). The region spanning 608 to 648 (DINECLTLGLCKDSECVNTRGSYLCTCRPGLMLDPSRSRCV) is the EGF-like 3; calcium-binding domain. Intrachain disulfides connect Cys612–Cys623, Cys618–Cys632, Cys634–Cys647, Cys660–Cys682, Cys669–Cys695, Cys683–Cys698, and Cys684–Cys710. One can recognise a TB 2 domain in the interval 658-710 (GLCYRSMVSGTCTLPLVQRITKQICCCSRVGKAWGSKCEHCPLPGTEAFREIC). 2 disordered regions span residues 729–759 (KAEEEELASPVREQRQQSSGPPPGAAERQPL) and 786–809 (SAPHLPARVPGDATGRPTPSLPGQ). The 43-residue stretch at 834–876 (GFDPCFAGASNICGPGTCVKLPNGYRCVCSPGYQLHPSQDYCT) folds into the EGF-like 4 domain. Cystine bridges form between Cys838–Cys851, Cys846–Cys860, Cys862–Cys875, Cys881–Cys892, Cys886–Cys901, Cys903–Cys918, Cys924–Cys935, Cys930–Cys944, Cys946–Cys958, Cys964–Cys975, Cys970–Cys984, Cys987–Cys998, Cys1004–Cys1015, Cys1010–Cys1024, Cys1026–Cys1039, Cys1045–Cys1056, Cys1051–Cys1065, Cys1068–Cys1081, Cys1087–Cys1098, Cys1093–Cys1107, Cys1110–Cys1123, Cys1129–Cys1141, Cys1136–Cys1150, Cys1152–Cys1164, Cys1170–Cys1182, Cys1176–Cys1191, Cys1193–Cys1206, Cys1212–Cys1223, Cys1218–Cys1232, Cys1234–Cys1247, Cys1253–Cys1265, Cys1259–Cys1274, Cys1276–Cys1289, Cys1295–Cys1307, Cys1302–Cys1316, Cys1318–Cys1332, Cys1359–Cys1382, Cys1369–Cys1394, Cys1383–Cys1397, Cys1435–Cys1448, Cys1443–Cys1457, Cys1459–Cys1472, Cys1478–Cys1488, Cys1483–Cys1497, and Cys1499–Cys1512. One can recognise an EGF-like 5; calcium-binding domain in the interval 877-919 (DDNECLRNPCEGRGRCVNSVGSYSCLCYPGYTLATLGDTQECQ). One can recognise an EGF-like 6; calcium-binding domain in the interval 920 to 959 (DVDECEQPGVCSGGRCSNTEGSYHCECDQGYVMVRRGHCQ). The region spanning 960-999 (DINECRHPGTCPDGRCVNSPGSYTCLACEEGYIGQSGNCV) is the EGF-like 7; calcium-binding domain. The EGF-like 8; calcium-binding domain occupies 1000–1040 (DMNECLTPGICAHGRCINMEGSFRCSCEPGYELTPDKKGCR). In terms of domain architecture, EGF-like 9; calcium-binding spans 1041–1082 (DVDECASRASCPTGLCLNTEGSFTCSACQSGYWVNEDGTACE). Residues 1083-1124 (DLDECAFPGVCPTGVCTNTVGSFSCKDCDRGFRPSPLGNSCE) enclose the EGF-like 10; calcium-binding domain. Residues 1125–1165 (DVDECEGPQNSCLGGECKNTDGSYQCLCPQGFQLANGTVCE) form the EGF-like 11; calcium-binding domain. N-linked (GlcNAc...) asparagine glycosylation occurs at Asn1160. The region spanning 1166–1207 (DVDECVGEEHCAPHGECLNSPGSFFCLCAPGFASAEGGTRCQ) is the EGF-like 12; calcium-binding domain. Residues 1208–1248 (DVDECATTEPCLGGHCVNTEGSFNCLCETGFQPAPDSGECV) form the EGF-like 13; calcium-binding domain. An EGF-like 15; calcium-binding domain is found at 1249 to 1290 (DIDECANDTVCGNHGFCDNTDGSFRCLCDQGFETSPSGWECV). The N-linked (GlcNAc...) asparagine glycan is linked to Asn1255. Positions 1291–1333 (DVNECELMLAVCGDALCENVEGSFLCLCASDLEEYDAEEGHCR) constitute an EGF-like 16; calcium-binding domain. Residues 1357–1409 (MECYAEHNGGPPCSQILGQNSTQAECCSTQGARWGETCDPCPSEDSVEFSELC) enclose the TB 3 domain. Asn1376 carries N-linked (GlcNAc...) asparagine glycosylation. Residues 1431 to 1473 (DADECILFGPALCQNGRCLNTVPGYICLCNPGYHYDAVSRKCQ) form the EGF-like 17; calcium-binding domain. The EGF-like 18; calcium-binding domain occupies 1474 to 1513 (DHNECQDLACENGECVNTEGSFHCFCSPPLILDLSGQRCV). Asn1514 carries N-linked (GlcNAc...) asparagine glycosylation. The TB 4 domain occupies 1530–1582 (DICWKKVTNDVCSQPLRGHHTTYTECCCQDGEAWSQQCALCPPRSSEVYAQLC). Intrachain disulfides connect Cys1532–Cys1555, Cys1541–Cys1567, Cys1556–Cys1570, Cys1557–Cys1582, Cys1680–Cys1691, Cys1686–Cys1700, Cys1702–Cys1715, Cys1721–Cys1736, Cys1731–Cys1745, and Cys1747–Cys1760. The tract at residues 1585–1764 (ARIEAEREAG…PGPPHCAAKE (180 aa)) is C-terminal domain. Residues 1676–1716 (QAEECGILNGCENGRCVRVREGYTCDCFEGFQLDTALMACV) enclose the EGF-like 19; calcium-binding domain. Residues 1717 to 1761 (DVNECEDLNGAARLCAHGHCENTEGSYRCHCSPGYVAEPGPPHCA) enclose the EGF-like 20; calcium-binding domain.

This sequence belongs to the LTBP family. As to quaternary structure, forms part of the large latent transforming growth factor beta precursor complex; removal is essential for activation of complex. Interacts with SDC4. Interacts (via C-terminal domain) with FBN1 (via N-terminal domain) in a Ca(+2)-dependent manner. In terms of processing, N-Glycosylated. Post-translationally, contains hydroxylated asparagine residues. In terms of tissue distribution, expressed in cortical astrocytes and glioma cells. Expression is up-regulated by TGFB1.

The protein resides in the secreted. The protein localises to the extracellular space. It localises to the extracellular matrix. In terms of biological role, may play an integral structural role in elastic-fiber architectural organization and/or assembly. The sequence is that of Latent-transforming growth factor beta-binding protein 2 (Ltbp2) from Rattus norvegicus (Rat).